Here is a 393-residue protein sequence, read N- to C-terminus: Sugar efflux transporter B (393 aa).

12 helical membrane passes run 13 to 33 (FDLT…AGAL), 51 to 71 (AMVG…SQFL), 82 to 102 (KSLI…FAWN), 106 to 126 (FVLL…NPQM), 152 to 172 (VSLA…GFSF), 174 to 194 (VMYL…WLFL), 219 to 239 (LLLF…IINM), 253 to 273 (LAGV…LIAG), 283 to 303 (FLMR…LMAH), 306 to 326 (VILL…GGIG), 344 to 364 (LYTN…GIVA), and 366 to 386 (IWNY…TLFC).

It belongs to the major facilitator superfamily. Set transporter family.

It is found in the cell inner membrane. Its function is as follows. Involved in the efflux of sugars. The physiological role may be the detoxification of non-metabolizable sugar analogs. Can transport lactose and glucose. The chain is Sugar efflux transporter B (setB) from Escherichia coli (strain K12).